Reading from the N-terminus, the 533-residue chain is Bifunctional aspartate aminotransferase and L-aspartate beta-decarboxylase (533 aa).

Residues glycine 115 and asparagine 256 each contribute to the L-aspartate site. The residue at position 315 (lysine 315) is an N6-(pyridoxal phosphate)lysine. Arginine 497 provides a ligand contact to L-aspartate.

Belongs to the class-I pyridoxal-phosphate-dependent aminotransferase family. As to quaternary structure, homododecamer. Pyridoxal 5'-phosphate is required as a cofactor.

It catalyses the reaction L-aspartate + H(+) = L-alanine + CO2. The catalysed reaction is L-aspartate + 2-oxoglutarate = oxaloacetate + L-glutamate. Functionally, bifunctional enzyme that has both L-aspartate decarboxylase and transaminase activity. In Comamonas testosteroni (Pseudomonas testosteroni), this protein is Bifunctional aspartate aminotransferase and L-aspartate beta-decarboxylase.